The following is a 203-amino-acid chain: Histidine biosynthesis bifunctional protein HisIE (203 aa).

The segment at 1–114 (MLTEQQRREL…FGDASHQWLF (114 aa)) is phosphoribosyl-AMP cyclohydrolase. The interval 115 to 203 (LYQLEQLLAE…VIDDLRKRHQ (89 aa)) is phosphoribosyl-ATP pyrophosphohydrolase.

It in the N-terminal section; belongs to the PRA-CH family. This sequence in the C-terminal section; belongs to the PRA-PH family.

It is found in the cytoplasm. The enzyme catalyses 1-(5-phospho-beta-D-ribosyl)-ATP + H2O = 1-(5-phospho-beta-D-ribosyl)-5'-AMP + diphosphate + H(+). It catalyses the reaction 1-(5-phospho-beta-D-ribosyl)-5'-AMP + H2O = 1-(5-phospho-beta-D-ribosyl)-5-[(5-phospho-beta-D-ribosylamino)methylideneamino]imidazole-4-carboxamide. It functions in the pathway amino-acid biosynthesis; L-histidine biosynthesis; L-histidine from 5-phospho-alpha-D-ribose 1-diphosphate: step 2/9. Its pathway is amino-acid biosynthesis; L-histidine biosynthesis; L-histidine from 5-phospho-alpha-D-ribose 1-diphosphate: step 3/9. In Salmonella typhi, this protein is Histidine biosynthesis bifunctional protein HisIE (hisI).